The following is a 538-amino-acid chain: Exo-alpha-bergamotene synthase (538 aa).

Positions 291, 295, 435, 439, and 443 each coordinate Mg(2+). Residues 291 to 295 (DDIYD) carry the DDXXD motif motif.

It belongs to the terpene synthase family. It depends on Mg(2+) as a cofactor. The cofactor is Mn(2+).

It catalyses the reaction (2E,6E)-farnesyl diphosphate = (1S,5S,6R)-alpha-bergamotene + diphosphate. Functionally, catalyzes a mixture of sesquiterpenoids from (2E,6E)-farnesyl diphosphate. Catalyzes the formation of exo-alpha-bergamotene, as well as (E)-nerolidol, (Z)-alpha-bisabolene, (E)-beta-farnesene and beta-sesquiphellandrene. Also has activity towards geranyl diphosphate, but to a much lesser extent. This chain is Exo-alpha-bergamotene synthase, found in Lavandula angustifolia (Lavender).